Here is a 917-residue protein sequence, read N- to C-terminus: Protein translocase subunit SecA 1 (917 aa).

Residues Gln-87, 105 to 109, and Asp-507 contribute to the ATP site; that span reads GEGKT. The segment at 866 to 917 is disordered; sequence EKSPESIGEDIEGREHPQKHQPFVRQGEKIGRNDPCPCGSGKKYKQCHGKLN. The Zn(2+) site is built by Cys-901, Cys-903, Cys-912, and His-913. Basic residues predominate over residues 907 to 917; it reads KKYKQCHGKLN.

It belongs to the SecA family. In terms of assembly, monomer and homodimer. Part of the essential Sec protein translocation apparatus which comprises SecA, SecYEG and auxiliary proteins SecDF-YajC and YidC. Zn(2+) serves as cofactor.

Its subcellular location is the cell inner membrane. The protein resides in the cytoplasm. It carries out the reaction ATP + H2O + cellular proteinSide 1 = ADP + phosphate + cellular proteinSide 2.. In terms of biological role, part of the Sec protein translocase complex. Interacts with the SecYEG preprotein conducting channel. Has a central role in coupling the hydrolysis of ATP to the transfer of proteins into and across the cell membrane, serving both as a receptor for the preprotein-SecB complex and as an ATP-driven molecular motor driving the stepwise translocation of polypeptide chains across the membrane. The polypeptide is Protein translocase subunit SecA 1 (Nitrosospira multiformis (strain ATCC 25196 / NCIMB 11849 / C 71)).